The following is a 606-amino-acid chain: DNA primase (606 aa).

The segment at 40-64 (CPFHQEKTPSFYVVPEKRFYFCHGC) adopts a CHC2-type zinc-finger fold. The 94-residue stretch at 256–349 (KAAVLVEGYF…DPDTFARREG (94 aa)) folds into the Toprim domain. Positions 262, 307, and 309 each coordinate Mg(2+). A disordered region spans residues 429 to 451 (VPLPKPAGGDAPPSSPNRPAPPL). Pro residues predominate over residues 441–451 (PSSPNRPAPPL).

It belongs to the DnaG primase family. Monomer. Interacts with DnaB. Zn(2+) serves as cofactor. Mg(2+) is required as a cofactor.

It catalyses the reaction ssDNA + n NTP = ssDNA/pppN(pN)n-1 hybrid + (n-1) diphosphate.. Functionally, RNA polymerase that catalyzes the synthesis of short RNA molecules used as primers for DNA polymerase during DNA replication. This Myxococcus xanthus protein is DNA primase.